A 433-amino-acid chain; its full sequence is Protein RETICULATA-RELATED 1, chloroplastic (433 aa).

Residues 1 to 63 constitute a chloroplast transit peptide; it reads MSISLKISHI…LSSRNLRNRC (63 aa). At Val-64 the chain carries N-acetylvaline. Residues 93-105 are compositionally biased toward acidic residues; sequence DLEPELDDGDGGD. The tract at residues 93–143 is disordered; that stretch reads DLEPELDDGDGGDENGNNDGGGNGGNGDGGGGGGDGEGDDGEDEADKAEEK. Residues 110 to 127 show a composition bias toward gly residues; it reads NDGGGNGGNGDGGGGGGD. The segment covering 128–139 has biased composition (acidic residues); the sequence is GEGDDGEDEADK. The next 2 helical transmembrane spans lie at 249-269 and 323-343; these read LYAA…GLLA and LLYG…ANLI.

This sequence belongs to the RETICULATA family. As to expression, expressed in root vasculature, distal region of young leaf primordia, leaf bundle sheath cells, hydathodes and pollen grains.

Its subcellular location is the plastid. It is found in the chloroplast membrane. Its function is as follows. May play a role in leaf development. This chain is Protein RETICULATA-RELATED 1, chloroplastic, found in Arabidopsis thaliana (Mouse-ear cress).